Here is a 264-residue protein sequence, read N- to C-terminus: Thymidylate synthase (264 aa).

Position 21 (arginine 21) interacts with dUMP. Histidine 51 serves as a coordination point for (6R)-5,10-methylene-5,6,7,8-tetrahydrofolate. Residue 126–127 (RR) participates in dUMP binding. Cysteine 146 functions as the Nucleophile in the catalytic mechanism. Residues 166 to 169 (RSAD), asparagine 177, and 207 to 209 (HLY) each bind dUMP. A (6R)-5,10-methylene-5,6,7,8-tetrahydrofolate-binding site is contributed by aspartate 169. Alanine 263 provides a ligand contact to (6R)-5,10-methylene-5,6,7,8-tetrahydrofolate.

The protein belongs to the thymidylate synthase family. Bacterial-type ThyA subfamily. As to quaternary structure, homodimer.

Its subcellular location is the cytoplasm. The catalysed reaction is dUMP + (6R)-5,10-methylene-5,6,7,8-tetrahydrofolate = 7,8-dihydrofolate + dTMP. The protein operates within pyrimidine metabolism; dTTP biosynthesis. In terms of biological role, catalyzes the reductive methylation of 2'-deoxyuridine-5'-monophosphate (dUMP) to 2'-deoxythymidine-5'-monophosphate (dTMP) while utilizing 5,10-methylenetetrahydrofolate (mTHF) as the methyl donor and reductant in the reaction, yielding dihydrofolate (DHF) as a by-product. This enzymatic reaction provides an intracellular de novo source of dTMP, an essential precursor for DNA biosynthesis. This is Thymidylate synthase from Legionella pneumophila (strain Lens).